The primary structure comprises 441 residues: Tol-Pal system protein TolB (441 aa).

An N-terminal signal peptide occupies residues 1–23 (MRNAIATVLLGLAMLLPVGAVQA). Residues 420–441 (RNLKPVKTPDGASDPSWSPLQN) are disordered.

The protein belongs to the TolB family. The Tol-Pal system is composed of five core proteins: the inner membrane proteins TolA, TolQ and TolR, the periplasmic protein TolB and the outer membrane protein Pal. They form a network linking the inner and outer membranes and the peptidoglycan layer.

It is found in the periplasm. Part of the Tol-Pal system, which plays a role in outer membrane invagination during cell division and is important for maintaining outer membrane integrity. In Ruegeria sp. (strain TM1040) (Silicibacter sp.), this protein is Tol-Pal system protein TolB.